A 498-amino-acid polypeptide reads, in one-letter code: uncharacterized protein (498 aa).

A signal peptide spans 1 to 26 (MEESSMAQASLICLLLSFSIIMLSNA). The Extracellular portion of the chain corresponds to 27–441 (ADISIDCGSS…GEEKSSSNLA (415 aa)). N-linked (GlcNAc...) asparagine glycans are attached at residues N44, N150, N354, and N357. A disordered region spans residues 351–439 (GSGNGTNSTS…KSGEEKSSSN (89 aa)). The segment covering 362-414 (SGGGSPSPGGGSGSPPSTGGGSGSPPSTGGGGGSPSKGGGGGKSGGSNNGDGG) has biased composition (gly residues). The segment covering 418–436 (ASEDEKSADSSGKSGEEKS) has biased composition (basic and acidic residues). Residues 442 to 462 (LPLGISLPTLLSLGAGGWGVW) traverse the membrane as a helical segment. Over 463 to 498 (KYFIKPRRHPESELPLKQNISLQVNMGNATVVNAGQ) the chain is Cytoplasmic.

The protein resides in the membrane. This is an uncharacterized protein from Arabidopsis thaliana (Mouse-ear cress).